The primary structure comprises 185 residues: Ribosome-recycling factor (185 aa).

The protein belongs to the RRF family.

The protein localises to the cytoplasm. In terms of biological role, responsible for the release of ribosomes from messenger RNA at the termination of protein biosynthesis. May increase the efficiency of translation by recycling ribosomes from one round of translation to another. The chain is Ribosome-recycling factor from Syntrophobacter fumaroxidans (strain DSM 10017 / MPOB).